Consider the following 160-residue polypeptide: FMRFamide-like neuropeptides 13 (160 aa).

The N-terminal stretch at 1–17 (MMTSLLTISMFVVAIQA) is a signal peptide. Residues 18-43 (FDSSEIRMLDEQYDTKNPFFQFLENS) constitute a propeptide that is removed on maturation. Residues phenylalanine 60, phenylalanine 73, phenylalanine 85, phenylalanine 98, phenylalanine 110, phenylalanine 123, phenylalanine 135, phenylalanine 146, and phenylalanine 157 each carry the phenylalanine amide modification.

It belongs to the FARP (FMRFamide related peptide) family. Expressed in the ASE sensory neurons, the DD motor neurons, the 15, M3 and M5 cholinergic pharyngeal motoneurons, and the ASG, ASK and BAG neurons.

It is found in the secreted. Probable FMRFamide-like neuropeptides. Binds to neuronal receptors such as dmsr-1 to promote sleep in response to cellular stress also known as stress-induced sleep (SIS). Plays a role in behaviors associated with SIS, acting in concert with the FMRFamide related peptide, flp-24 and neuropeptide-like protein nlp-8. In terms of biological role, AADGAPLIRF-amide: Inhibits muscle tension in somatic muscle. Acts as a ligand for the npr-22 receptor in vitro. Acts as a ligand for isoform a of the dmsr-1 G-protein coupled receptor in vitro. Its function is as follows. APEASPFIRF-amide: Inhibits muscle tension in somatic muscle. Potent inhibitor of the activity of the dissected pharyngeal myogenic muscle system. Acts as a ligand for isoform a of the dmsr-1 G-protein coupled receptor in vitro. Functionally, acts as a ligand for the npr-22 receptor in vitro. Acts as a ligand for isoform a of the dmsr-1 G-protein coupled receptor in vitro. Acts as a ligand for isoform a of the dmsr-1 G-protein coupled receptor in vitro. This Caenorhabditis elegans protein is FMRFamide-like neuropeptides 13.